Reading from the N-terminus, the 548-residue chain is uncharacterized protein (548 aa).

Residues 8 to 200 (KLFADMIIQG…LLCVYEGFLK (193 aa)) form the DhaL domain.

This is an uncharacterized protein from Staphylococcus aureus (strain bovine RF122 / ET3-1).